A 216-amino-acid chain; its full sequence is Ribosomal RNA large subunit methyltransferase E (216 aa).

Positions 67, 69, 87, 103, and 128 each coordinate S-adenosyl-L-methionine. Residue lysine 168 is the Proton acceptor of the active site.

Belongs to the class I-like SAM-binding methyltransferase superfamily. RNA methyltransferase RlmE family.

The protein localises to the cytoplasm. It catalyses the reaction uridine(2552) in 23S rRNA + S-adenosyl-L-methionine = 2'-O-methyluridine(2552) in 23S rRNA + S-adenosyl-L-homocysteine + H(+). Functionally, specifically methylates the uridine in position 2552 of 23S rRNA at the 2'-O position of the ribose in the fully assembled 50S ribosomal subunit. The polypeptide is Ribosomal RNA large subunit methyltransferase E (Acinetobacter baylyi (strain ATCC 33305 / BD413 / ADP1)).